The primary structure comprises 707 residues: Transcription factor 12 (707 aa).

The tract at residues 25-109 (AMFSPPVNSG…TPFMNSNLIG (85 aa)) is disordered. Polar residues-rich tracts occupy residues 30–48 (PVNS…QFSG) and 56–76 (GTTS…SRGF). Phosphoserine occurs at positions 47, 67, and 79. A compositionally biased stretch (basic and acidic residues) spans 81-93 (HYSDHLNDSRLGT). The residue at position 98 (S98) is a Phosphoserine. K110 participates in a covalent cross-link: Glycyl lysine isopeptide (Lys-Gly) (interchain with G-Cter in SUMO2). 2 positions are modified to phosphoserine: S116 and S124. The segment at 119–140 (LYSRDSGLSGCQSSLLRQDLGL) is leucine-zipper. Disordered stretches follow at residues 140–222 (LGSP…SMFA) and 249–313 (FGGI…ASHT). Positions 144 to 163 (AQLSSSGKPGTPYYSFSATS) are enriched in polar residues. K181 participates in a covalent cross-link: Glycyl lysine isopeptide (Lys-Gly) (interchain with G-Cter in SUMO2). Residues 256–269 (STSHMSQSSSYGSL) are compositionally biased toward low complexity. Residues 282–306 (VSPTDINTSLPPMSSFHRGSTSSSP) show a composition bias toward polar residues. T313 carries the post-translational modification Phosphothreonine. S333 bears the Phosphoserine mark. Disordered regions lie at residues 349 to 393 (PDHT…YENS) and 521 to 605 (HKTP…ERRM). Positions 352-363 (TSSSFPSNPSTP) are enriched in low complexity. 2 stretches are compositionally biased toward polar residues: residues 364–377 (VGSP…TSQW) and 384–393 (APSSPSYENS). 2 stretches are compositionally biased toward basic and acidic residues: residues 543–555 (IKTE…ENLH) and 561–576 (DDMK…DIKV). K544 is covalently cross-linked (Glycyl lysine isopeptide (Lys-Gly) (interchain with G-Cter in SUMO2)). S565 is modified (phosphoserine). K575 is covalently cross-linked (Glycyl lysine isopeptide (Lys-Gly) (interchain with G-Cter in SUMO2)). At T582 the chain carries Phosphothreonine. A phosphoserine mark is found at S583 and S584. The segment covering 593 to 605 (PEQKIEREKERRM) has biased composition (basic and acidic residues). A bHLH domain is found at 602–655 (ERRMANNARERLRVRDINEAFKELGRMCQLHLKSEKPQTKLLILHQAVAVILSL). Residues K634 and K678 each participate in a glycyl lysine isopeptide (Lys-Gly) (interchain with G-Cter in SUMO2) cross-link. Residues 657 to 680 (QQVRERNLNPKAACLKRREEEKVS) form a class A specific domain region. A disordered region spans residues 675–707 (EEEKVSAASAEPPTTLPGTHPGLSETTNPMGHL). Over residues 686 to 697 (PPTTLPGTHPGL) the composition is skewed to low complexity. Over residues 698-707 (SETTNPMGHL) the composition is skewed to polar residues.

Efficient DNA binding requires dimerization with another bHLH protein. Forms homo- or heterooligomers with myogenin, E12 and ITF2 proteins. Interacts with PTF1. Interacts with RUNX1T1. Interacts with NEUROD2. Interacts with BHLHA9. As to expression, isoform gamma is highly expressed in lung, kidney, spleen, and is expressed at reduced levels in heart, muscle, liver, pituitary, brain and the trigeminal ganglion. The expression of isoform alpha predominates over isoform gamma in the pituitary and the brain.

The protein localises to the nucleus. In terms of biological role, transcriptional regulator. Involved in the initiation of neuronal differentiation. Activates transcription by binding to the E box (5'-CANNTG-3'). May be involved in the functional network that regulates the development of the GnRH axis. This Rattus norvegicus (Rat) protein is Transcription factor 12 (Tcf12).